Here is a 290-residue protein sequence, read N- to C-terminus: Succinate dehydrogenase [ubiquinone] iron-sulfur subunit, mitochondrial (290 aa).

Residues 1-38 (MAAAVVGVSLRRGVPARFLRAGLRPVRGLEAVHGICRG) constitute a mitochondrion transit peptide. The region spanning 50–143 (KKFSIYRWDP…TTKIYPLPHM (94 aa)) is the 2Fe-2S ferredoxin-type domain. [2Fe-2S] cluster-binding residues include Cys-103, Cys-108, Cys-111, and Cys-123. One can recognise a 4Fe-4S ferredoxin-type domain in the interval 186–216 (DRQKLDGLYECILCACCSTSCPSYWWNGDKY). 3 residues coordinate [4Fe-4S] cluster: Cys-196, Cys-199, and Cys-202. Cys-206 contributes to the [3Fe-4S] cluster binding site. Trp-211 serves as a coordination point for a ubiquinone. Positions 253 and 259 each coordinate [3Fe-4S] cluster. Cys-263 lines the [4Fe-4S] cluster pocket.

The protein belongs to the succinate dehydrogenase/fumarate reductase iron-sulfur protein family. Component of complex II composed of four subunits: the flavoprotein (FP) SDHA, iron-sulfur protein (IP) SDHB, and a cytochrome b560 composed of SDHC and SDHD. The cofactor is [2Fe-2S] cluster. Requires [3Fe-4S] cluster as cofactor. [4Fe-4S] cluster serves as cofactor.

Its subcellular location is the mitochondrion inner membrane. It catalyses the reaction a quinone + succinate = fumarate + a quinol. It carries out the reaction (R)-malate + a quinone = enol-oxaloacetate + a quinol. The enzyme catalyses (S)-malate + a quinone = enol-oxaloacetate + a quinol. The protein operates within carbohydrate metabolism; tricarboxylic acid cycle; fumarate from succinate (eukaryal route): step 1/1. Enol-oxaloacetate inhibits the succinate dehydrogenase activity. In terms of biological role, iron-sulfur protein (IP) subunit of the succinate dehydrogenase complex (mitochondrial respiratory chain complex II), responsible for transferring electrons from succinate to ubiquinone (coenzyme Q). SDH also oxidizes malate to the non-canonical enol form of oxaloacetate, enol-oxaloacetate. Enol-oxaloacetate, which is a potent inhibitor of the succinate dehydrogenase activity, is further isomerized into keto-oxaloacetate. This chain is Succinate dehydrogenase [ubiquinone] iron-sulfur subunit, mitochondrial (SDHB), found in Gallus gallus (Chicken).